The following is a 510-amino-acid chain: Beta-glucosidase 26 (510 aa).

A signal peptide spans Met-1 to Cys-27. Gln-59 provides a ligand contact to a beta-D-glucoside. Residues Asn-87 and Asn-127 are each glycosylated (N-linked (GlcNAc...) asparagine). A beta-D-glucoside contacts are provided by residues His-160 and Asn-205–Glu-206. The active-site Proton donor is Glu-206. Residues Cys-225 and Cys-228 are joined by a disulfide bond. Asn-233 is a glycosylation site (N-linked (GlcNAc...) asparagine). Residues Tyr-345 and Glu-416 each coordinate a beta-D-glucoside. Glu-416 (nucleophile) is an active-site residue. The N-linked (GlcNAc...) asparagine glycan is linked to Asn-424. A beta-D-glucoside is bound by residues Trp-463, Glu-470–Trp-471, and Phe-479.

It belongs to the glycosyl hydrolase 1 family.

The enzyme catalyses Hydrolysis of terminal, non-reducing beta-D-glucosyl residues with release of beta-D-glucose.. Functionally, hydrolyzes p-nitrophenyl beta-D-glucoside, p-nitrophenyl beta-D-mannoside, p-nitrophenyl beta-D-galactoside, p-nitrophenyl beta-D-xyloside, p-nitrophenyl beta-D-fucoside, p-nitrophenyl beta-L-arabinoside, cello-oligosaccharides, laminari-oligosaccharides and sophorose. The sequence is that of Beta-glucosidase 26 (BGLU26) from Oryza sativa subsp. japonica (Rice).